The sequence spans 452 residues: tRNA modification GTPase MnmE (452 aa).

Residues R28, E85, and K124 each coordinate (6S)-5-formyl-5,6,7,8-tetrahydrofolate. The region spanning 220–378 is the TrmE-type G domain; that stretch reads GMNVVLVGRP…LRTELLRAAG (159 aa). K(+) is bound at residue N230. GTP-binding positions include 230 to 235, 249 to 255, 274 to 277, and 359 to 361; these read NVGKSS, TDVAGTT, DTAG, and SAR. S234 contributes to the Mg(2+) binding site. Residues T249, V251, and T254 each coordinate K(+). Mg(2+) is bound at residue T255. A (6S)-5-formyl-5,6,7,8-tetrahydrofolate-binding site is contributed by K452.

This sequence belongs to the TRAFAC class TrmE-Era-EngA-EngB-Septin-like GTPase superfamily. TrmE GTPase family. Homodimer. Heterotetramer of two MnmE and two MnmG subunits. Requires K(+) as cofactor.

The protein localises to the cytoplasm. Its function is as follows. Exhibits a very high intrinsic GTPase hydrolysis rate. Involved in the addition of a carboxymethylaminomethyl (cmnm) group at the wobble position (U34) of certain tRNAs, forming tRNA-cmnm(5)s(2)U34. The polypeptide is tRNA modification GTPase MnmE (Azoarcus sp. (strain BH72)).